The chain runs to 1487 residues: Collagen alpha-1(II) chain (1487 aa).

Positions 1–25 (MIRLGAPQTLVLLTLLVAAVLRCHG) are cleaved as a signal peptide. Positions 26-181 (QDVQKAGSCV…PPGLGGNFAA (156 aa)) are cleaved as a propeptide — N-terminal propeptide. Positions 32 to 90 (GSCVQDGQRYNDKDVWKPEPCRICVCDTGTVLCDDIICEDMKDCLSPETPFGECCPICS) constitute a VWFC domain. The disordered stretch occupies residues 96-1234 (ASGQPGPKGQ…GLGQREKGPD (1139 aa)). Basic and acidic residues-rich tracts occupy residues 105–116 (QKGEPGDIKDIV) and 133–154 (PRGD…RDGE). Over residues 158–173 (PGNPGPPGPPGPPGPP) the composition is skewed to pro residues. A 5-hydroxylysine modification is found at Lys-190. Lys-190 carries an O-linked (Gal...) hydroxylysine glycan. Over residues 192–203 (GGAQMGVMQGPM) the composition is skewed to low complexity. A triple-helical region region spans residues 201-1214 (GPMGPMGPRG…PGPPGPPGPP (1014 aa)). Positions 208 to 217 (PRGPPGPAGA) are enriched in pro residues. A hydroxyproline mark is found at Pro-212, Pro-218, Pro-230, Pro-233, Pro-245, Pro-248, Pro-251, Pro-260, Pro-269, Pro-278, Pro-281, and Pro-284. Over residues 218-239 (PGPQGFQGNPGEPGEPGVSGPM) the composition is skewed to low complexity. A compositionally biased stretch (pro residues) spans 241–250 (PRGPPGPPGK). Residues 251–265 (PGDDGEAGKPGKSGE) show a composition bias toward basic and acidic residues. At Lys-287 the chain carries 5-hydroxylysine. Lys-287 carries O-linked (Gal...) hydroxylysine glycosylation. Residue Pro-293 is modified to Hydroxyproline. Lys-299 is modified (5-hydroxylysine). Residue Lys-299 is glycosylated (O-linked (Gal...) hydroxylysine). Pro-305 is subject to Hydroxyproline. Lys-308 is modified (5-hydroxylysine). Lys-308 carries O-linked (Gal...) hydroxylysine glycosylation. Positions 310–320 (ESGSPGENGSP) are enriched in low complexity. Pro-314, Pro-320, Pro-329, Pro-350, Pro-356, Pro-365, Pro-368, and Pro-371 each carry hydroxyproline. Low complexity predominate over residues 335–350 (TGPAGAAGARGNDGQP). A compositionally biased stretch (gly residues) spans 360 to 369 (GPAGGPGFPG). Composition is skewed to low complexity over residues 370 to 382 (APGA…PTGA) and 391 to 431 (PRGE…AGAP). Position 374 is a 5-hydroxylysine (Lys-374). Lys-374 carries O-linked (Gal...) hydroxylysine glycosylation. A hydroxyproline mark is found at Pro-395, Pro-398, Pro-401, Pro-410, and Pro-416. At Lys-419 the chain carries 5-hydroxylysine. Pro-425, Pro-431, Pro-434, and Pro-440 each carry hydroxyproline. The span at 433-442 (FPGPRGPPGP) shows a compositional bias: pro residues. The residue at position 452 (Lys-452) is a 5-hydroxylysine. Pro-458 bears the Hydroxyproline mark. Residues Lys-464 and Lys-470 each carry the 5-hydroxylysine modification. A hydroxyproline mark is found at Pro-473, Pro-482, Pro-497, Pro-506, Pro-512, and Pro-518. Lys-527 is subject to 5-hydroxylysine. Pro-530 is modified (hydroxyproline). The residue at position 542 (Lys-542) is a 5-hydroxylysine. Hydroxyproline occurs at positions 551, 557, 566, 581, 587, 590, 599, and 605. At Lys-608 the chain carries 5-hydroxylysine. Lys-608 is a glycosylation site (O-linked (Gal...) hydroxylysine). Pro-614 carries the post-translational modification Hydroxyproline. A 5-hydroxylysine modification is found at Lys-620. Lys-620 is a glycosylation site (O-linked (Gal...) hydroxylysine). The segment covering 622-631 (LPGAPGLRGL) has biased composition (low complexity). Hydroxyproline occurs at positions 623, 626, 632, 644, 659, and 668. Low complexity predominate over residues 656-667 (QGAPGPSGFQGL). Pro-670 is subject to 3-hydroxyproline. Hydroxyproline is present on residues Pro-671 and Pro-674. Low complexity predominate over residues 721-736 (LPGTPGTDGPKGAAGP). Residues 764 to 775 (KGDRGDVGEKGP) show a composition bias toward basic and acidic residues. 2 stretches are compositionally biased toward low complexity: residues 833 to 848 (AGFA…PGAK) and 877 to 913 (PTGV…SNGN). Pro-907 carries the post-translational modification 3-hydroxyproline. A 4-hydroxyproline mark is found at Pro-908, Pro-914, and Pro-920. Over residues 1069–1079 (APGPPGSPGPA) the composition is skewed to pro residues. The segment covering 1091-1109 (AGAQGPMGPAGPAGARGMP) has biased composition (low complexity). Basic and acidic residues predominate over residues 1115–1129 (RGDKGETGEAGERGL). Lys-1130 bears the 5-hydroxylysine mark. The O-linked (Gal...) hydroxylysine glycan is linked to Lys-1130. Pro-1144 carries the 3-hydroxyproline modification. Residues 1148–1157 (SGDQGASGPA) show a composition bias toward low complexity. Pro-1181 is modified (4-hydroxyproline). 3-hydroxyproline is present on Pro-1186. Pro-1187 is subject to 4-hydroxyproline. Pro residues predominate over residues 1199–1216 (AGPPGNPGPPGPPGPPGP). Pro-1201 carries the post-translational modification 3-hydroxyproline. A 4-hydroxyproline mark is found at Pro-1202 and Pro-1205. Residue Pro-1207 is modified to 3-hydroxyproline. A 4-hydroxyproline mark is found at Pro-1208 and Pro-1211. Residue Pro-1213 is modified to 3-hydroxyproline. Pro-1214 is modified (4-hydroxyproline). Positions 1215-1241 (GPGIDMSAFAGLGQREKGPDPLQYMRA) are nonhelical region (C-terminal). Residues 1253–1487 (AEVDATLKSL…GVDIGPVCFL (235 aa)) form the Fibrillar collagen NC1 domain. Cystine bridges form between Cys-1283-Cys-1315, Cys-1323-Cys-1485, and Cys-1393-Cys-1438. Ca(2+) contacts are provided by Asp-1301, Asn-1303, Gln-1304, Cys-1306, and Asp-1309. Residue Asn-1388 is glycosylated (N-linked (GlcNAc...) asparagine).

Belongs to the fibrillar collagen family. As to quaternary structure, homotrimers of alpha 1(II) chains. Probably 3-hydroxylated on prolines by LEPREL1. Proline residues at the third position of the tripeptide repeating unit (G-X-P) are hydroxylated in some or all of the chains. Proline residues at the second position of the tripeptide repeating unit (G-P-X) are hydroxylated in some of the chains. In terms of processing, O-linked glycans consist of Glc-Gal disaccharides bound to the oxygen atom of post-translationally added hydroxyl groups. Post-translationally, contains mostly 4-hydroxyproline. Prolines at the third position of the tripeptide repeating unit (G-X-P) are 4-hydroxylated in some or all of the chains. Contains 3-hydroxyproline at a few sites. This modification occurs on the first proline residue in the sequence motif Gly-Pro-Hyp, where Hyp is 4-hydroxyproline. In terms of processing, lysine residues at the third position of the tripeptide repeating unit (G-X-Y) are 5-hydroxylated in some or all of the chains. Post-translationally, O-glycosylated on hydroxylated lysine residues. The O-linked glycan consists of a Glc-Gal disaccharide.

It localises to the secreted. Its subcellular location is the extracellular space. The protein localises to the extracellular matrix. Functionally, type II collagen is specific for cartilaginous tissues. It is essential for the normal embryonic development of the skeleton, for linear growth and for the ability of cartilage to resist compressive forces. The sequence is that of Collagen alpha-1(II) chain from Bos taurus (Bovine).